We begin with the raw amino-acid sequence, 273 residues long: Glutamate 5-kinase (273 aa).

Residue lysine 15 participates in ATP binding. Serine 55, aspartate 142, and asparagine 158 together coordinate substrate. ATP is bound by residues 178 to 179 (SD) and 220 to 226 (TGGMLSK).

Belongs to the glutamate 5-kinase family.

Its subcellular location is the cytoplasm. The enzyme catalyses L-glutamate + ATP = L-glutamyl 5-phosphate + ADP. It participates in amino-acid biosynthesis; L-proline biosynthesis; L-glutamate 5-semialdehyde from L-glutamate: step 1/2. Its function is as follows. Catalyzes the transfer of a phosphate group to glutamate to form L-glutamate 5-phosphate. In Streptococcus pyogenes serotype M2 (strain MGAS10270), this protein is Glutamate 5-kinase.